The following is a 274-amino-acid chain: NH(3)-dependent NAD(+) synthetase (274 aa).

46-53 (GISGGQDS) contributes to the ATP binding site. D52 lines the Mg(2+) pocket. R140 serves as a coordination point for deamido-NAD(+). Residue T160 participates in ATP binding. E165 contributes to the Mg(2+) binding site. Deamido-NAD(+) is bound by residues K173 and D180. Residues K189 and T211 each contribute to the ATP site. 260 to 261 (HK) contacts deamido-NAD(+).

The protein belongs to the NAD synthetase family. Homodimer.

It carries out the reaction deamido-NAD(+) + NH4(+) + ATP = AMP + diphosphate + NAD(+) + H(+). It functions in the pathway cofactor biosynthesis; NAD(+) biosynthesis; NAD(+) from deamido-NAD(+) (ammonia route): step 1/1. In terms of biological role, catalyzes the ATP-dependent amidation of deamido-NAD to form NAD. Uses ammonia as a nitrogen source. The sequence is that of NH(3)-dependent NAD(+) synthetase from Pectobacterium carotovorum subsp. carotovorum (strain PC1).